Here is a 2871-residue protein sequence, read N- to C-terminus: Desmoplakin (2871 aa).

The interaction with PKP1, JUP, PKP2 stretch occupies residues 1–584; it reads MSCNGGSHPR…DYMKTIADLE (584 aa). The globular 1 stretch occupies residues 1–1056; the sequence is MSCNGGSHPR…ANSENCNKNK (1056 aa). A phosphoserine mark is found at S22 and S53. Y56 is modified (phosphotyrosine). The residue at position 61 (T61) is a Phosphothreonine. Residues S165, S166, and S176 each carry the phosphoserine modification. Spectrin repeat units follow at residues 178–271 and 272–375; these read SGWD…HLRQ and LQNI…LKEN. Residues 376-446 form a Spectrin 3a repeat; the sequence is AAYFQFFEEA…NLVNKSKKIV (71 aa). One can recognise an SH3 domain in the interval 458–515; the sequence is NKPIILRALCDYKQDQKIVHKGDECILKDNNERSKWYVTGPGGVDMLVPSVGLIIPPP. One copy of the Spectrin 3b repeat lies at 516–545; it reads NPLAVDLSCKIEQYYEAILALWNQLYINMK. Spectrin repeat units follow at residues 546–627, 654–769, and 770–883; these read SLVS…IQLP, VIET…SLCT, and VRAL…DLEK. Residues 1018 to 1945 are a coiled coil; it reads SEMLKSLEDL…QREIDKLRQR (928 aa). Residues 1057 to 1945 form a central fibrous rod domain region; that stretch reads FLDQNLQKYQ…QREIDKLRQR (889 aa). A phosphoserine mark is found at S1658, S1708, and S2024. Residues 1946–2871 form a globular 2 region; it reads PYGSHRETQT…YSFSSSSIGH (926 aa). The segment at 1960 to 2208 is 4.5 X 38 AA tandem repeats (Domain A); it reads TVDTSKLVFD…LLLSVQKRSM (249 aa). Plectin repeat units follow at residues 2009–2045, 2046–2083, 2084–2121, 2122–2159, 2163–2197, 2198–2233, 2251–2288, 2289–2326, 2327–2364, 2365–2402, 2406–2440, 2456–2493, 2507–2544, 2610–2647, 2648–2685, 2724–2761, and 2762–2799; these read QPFL…PEST, VMLL…FDDR, QQIY…RETG, MRLL…RDLY, NDPR…PHTG, LLLL…PSTV, KDFL…PGTA, LELL…IEFK, EKLL…KGHG, IRLL…EELS, SDPS…EETG, SQKN…YETF, TITG…RKFF, SDTL…SITG, QRLL…QDMA, QRFL…GRAA, and QRLQ…DITG. Phosphoserine is present on residues S2207, S2209, and S2225. The tract at residues 2244–2446 is 4.5 X 38 AA tandem repeats (Domain B); it reads DEVGERIKDF…EETGLCLLPL (203 aa). Residues 2609-2822 are 4.5 X 38 AA tandem repeats (Domain C); it reads FSDTLEESSP…LPSPYNMSSA (214 aa). 2 positions are modified to phosphoserine: S2810 and S2815. A compositionally biased stretch (polar residues) spans 2810-2823; the sequence is SKGLPSPYNMSSAP. The disordered stretch occupies residues 2810–2871; sequence SKGLPSPYNM…YSFSSSSIGH (62 aa). Residue Y2817 is modified to Phosphotyrosine. S2820, S2821, and S2825 each carry phosphoserine. A 6 X 4 AA tandem repeats of G-S-R-[SR] region spans residues 2824–2847; that stretch reads GSRSGSRSGSRSGSRSGSRSGSRR. The span at 2824–2847 shows a compositional bias: low complexity; that stretch reads GSRSGSRSGSRSGSRSGSRSGSRR. R2826 and R2847 each carry omega-N-methylarginine. S2849 carries the phosphoserine modification. Phosphothreonine is present on T2853. Residues 2856-2871 are compositionally biased toward low complexity; it reads SSYSYSYSFSSSSIGH. S2868 bears the Phosphoserine mark.

Belongs to the plakin or cytolinker family. In terms of assembly, homodimer. Interacts with COL17A1 (via cytoplasmic region). Interacts with DSC2. Interacts with PKP2. Interacts with PKP1. Interacts weakly with TMEM65. Post-translationally, phosphorylation at Ser-2849 increases association with intermediate filament cytokeratin, potentially facilitating interaction between desmosome junctions and intermediate filament architecture. As to expression, expressed in oral mucosa (at protein level). Expressed in arrector pili muscle (at protein level). Expressed in the heart in the heart (at protein level). Apparently an obligate constituent of all desmosomes. In terms of tissue distribution, resides predominantly in tissues and cells of stratified origin.

The protein resides in the cell junction. The protein localises to the desmosome. It is found in the cell membrane. It localises to the cytoplasm. Its function is as follows. Major high molecular weight protein of desmosomes. Regulates profibrotic gene expression in cardiomyocytes via activation of the MAPK14/p38 MAPK signaling cascade and increase in TGFB1 protein abundance. This Homo sapiens (Human) protein is Desmoplakin (DSP).